The following is a 507-amino-acid chain: Fluoroacetaldehyde dehydrogenase (507 aa).

Residue 219 to 225 (GFGIEAG) coordinates NAD(+). Residues Glu263 and Cys302 contribute to the active site.

The protein belongs to the aldehyde dehydrogenase family. As to quaternary structure, homotetramer.

It catalyses the reaction fluoroacetaldehyde + NAD(+) + H2O = fluoroacetate + NADH + 2 H(+). Functionally, catalyzes the oxidation of fluoroacetaldehyde to fluoroacetate. Has high affinity for fluoroacetate and glycolaldehyde but not for acetaldehyde. In Streptantibioticus cattleyicolor (strain ATCC 35852 / DSM 46488 / JCM 4925 / NBRC 14057 / NRRL 8057) (Streptomyces cattleya), this protein is Fluoroacetaldehyde dehydrogenase.